A 502-amino-acid polypeptide reads, in one-letter code: MKVRTRIAPSPTGFPHVGTAYIALFNLCFAKQHGGEFILRIEDTDQLRSTPESEQMILDSLRWLGLNWSEGPDVGGPHAPYRQSERMGIYKQYALDLIEKGHAFYCFATAEELDQMRAEQQARGETPKYDGRGLKLSQEEVERRLAAGEPHVIRMKVPEEGICKFNDLLRGEVEIPWAQVDMQVLLKTDGLPTYHLANVVDDHLMEITHVLRGEEWLPSAPKHQLLYQYFGWDMPTLCHMPLLRNPDKSKLSKRKNPTSINYYRDIGVLPEALLNYLGRMGWSMPDEREVFTLTDMIEHFDIQRVSLGGPIFDVDKLNWLNGQWIKSLTPGQLLDRLLSWKSDRQTLEDIATAIQPRINLLSEAVNWAGFYFNHMPNITAEMFESKKLSPEQVRQSLQFAIWRLESQFTWNNETVSQILMDLANQMDIKLRDFMPAFFIAIAGSTSSTPVMQSMVTIGPDLTFARLRRALEIVGAPSKKELKVWEKLNESLKLPKNETVDNT.

The 'HIGH' region motif lies at 9-19 (PSPTGFPHVGT). The short motif at 250–254 (KLSKR) is the 'KMSKS' region element. Lysine 253 contacts ATP.

Belongs to the class-I aminoacyl-tRNA synthetase family. Glutamate--tRNA ligase type 1 subfamily. As to quaternary structure, monomer.

It localises to the cytoplasm. The catalysed reaction is tRNA(Glu) + L-glutamate + ATP = L-glutamyl-tRNA(Glu) + AMP + diphosphate. Catalyzes the attachment of glutamate to tRNA(Glu) in a two-step reaction: glutamate is first activated by ATP to form Glu-AMP and then transferred to the acceptor end of tRNA(Glu). This Acinetobacter baylyi (strain ATCC 33305 / BD413 / ADP1) protein is Glutamate--tRNA ligase.